Consider the following 345-residue polypeptide: MSSNSSLLVAVQLCYPNVNGSCVETLYSPGSRVILYIVFGFGAVLAVFGNLLVMISILHFKQLHSPTNFLVASLACADFLVGVTVMPFSMVRTVESCWYFGRSFCTFHTCCDVAFCYSSLFHLCFISIDRYIAVTDPLVYPTKFTVSVSGICISVSWILPLMYSGAVFYTGVYDDGLEELSDALNCIGGCQTVVNQNWVLIDCLSFFIPTFIMIILYGNIFLVARRQAKKIENTGSKTESSSESYKARVARRERKAAKTLGVTVVAFMISWLPYSIDSLIDAFMGFITPAYIYEICCWCAYYNSAMNPLIYALFYPWFRKAIKVIVTGQVLKNSSATMNLFSEHI.

Residues 1–32 lie on the Extracellular side of the membrane; that stretch reads MSSNSSLLVAVQLCYPNVNGSCVETLYSPGSR. Residues N4 and N19 are each glycosylated (N-linked (GlcNAc...) asparagine). 2 disulfides stabilise this stretch: C22/C186 and C105/C190. The chain crosses the membrane as a helical span at residues 33–53; it reads VILYIVFGFGAVLAVFGNLLV. At 54-68 the chain is on the cytoplasmic side; that stretch reads MISILHFKQLHSPTN. The helical transmembrane segment at 69-89 threads the bilayer; that stretch reads FLVASLACADFLVGVTVMPFS. Topologically, residues 90–107 are extracellular; it reads MVRTVESCWYFGRSFCTF. A helical transmembrane segment spans residues 108–128; the sequence is HTCCDVAFCYSSLFHLCFISI. Residues 129–147 are Cytoplasmic-facing; it reads DRYIAVTDPLVYPTKFTVS. The chain crosses the membrane as a helical span at residues 148–168; the sequence is VSGICISVSWILPLMYSGAVF. Residues 169 to 202 lie on the Extracellular side of the membrane; it reads YTGVYDDGLEELSDALNCIGGCQTVVNQNWVLID. A helical transmembrane segment spans residues 203–223; that stretch reads CLSFFIPTFIMIILYGNIFLV. The Cytoplasmic portion of the chain corresponds to 224–259; sequence ARRQAKKIENTGSKTESSSESYKARVARRERKAAKT. Residues 260-276 form a helical membrane-spanning segment; that stretch reads LGVTVVAFMISWLPYSI. Topologically, residues 277 to 282 are extracellular; it reads DSLIDA. Residues 283–302 traverse the membrane as a helical segment; the sequence is FMGFITPAYIYEICCWCAYY. At 303-345 the chain is on the cytoplasmic side; the sequence is NSAMNPLIYALFYPWFRKAIKVIVTGQVLKNSSATMNLFSEHI.

It belongs to the G-protein coupled receptor 1 family.

Its subcellular location is the cell membrane. Functionally, olfactory receptor specific for trace amines, such as beta-phenylethylamine (beta-PEA). Trace amine compounds are enriched in animal body fluids and act on trace amine-associated receptors (TAARs) to elicit both intraspecific and interspecific innate behaviors. Beta-PEA-binding causes a conformation change that triggers signaling via G(s)-class of G alpha proteins (GNAL or GNAS). The polypeptide is Trace amine-associated receptor 6 (TAAR6) (Pan troglodytes (Chimpanzee)).